The following is a 474-amino-acid chain: tRNA-2-methylthio-N(6)-dimethylallyladenosine synthase (474 aa).

The 118-residue stretch at 3 to 120 (KKLHIKTWGC…LPDMIEQVRR (118 aa)) folds into the MTTase N-terminal domain. Residues C12, C49, C83, C157, C161, and C164 each coordinate [4Fe-4S] cluster. Positions 143–375 (RAEGPTAFVS…QDRITQQAMR (233 aa)) constitute a Radical SAM core domain. In terms of domain architecture, TRAM spans 378–441 (RHMMGTVQRI…TNSLRGKFIR (64 aa)).

The protein belongs to the methylthiotransferase family. MiaB subfamily. As to quaternary structure, monomer. The cofactor is [4Fe-4S] cluster.

The protein resides in the cytoplasm. It catalyses the reaction N(6)-dimethylallyladenosine(37) in tRNA + (sulfur carrier)-SH + AH2 + 2 S-adenosyl-L-methionine = 2-methylsulfanyl-N(6)-dimethylallyladenosine(37) in tRNA + (sulfur carrier)-H + 5'-deoxyadenosine + L-methionine + A + S-adenosyl-L-homocysteine + 2 H(+). In terms of biological role, catalyzes the methylthiolation of N6-(dimethylallyl)adenosine (i(6)A), leading to the formation of 2-methylthio-N6-(dimethylallyl)adenosine (ms(2)i(6)A) at position 37 in tRNAs that read codons beginning with uridine. In Shewanella sp. (strain W3-18-1), this protein is tRNA-2-methylthio-N(6)-dimethylallyladenosine synthase.